Here is a 124-residue protein sequence, read N- to C-terminus: Small ribosomal subunit protein uS12 (124 aa).

Aspartate 89 is modified (3-methylthioaspartic acid).

The protein belongs to the universal ribosomal protein uS12 family. Part of the 30S ribosomal subunit. Contacts proteins S8 and S17. May interact with IF1 in the 30S initiation complex.

With S4 and S5 plays an important role in translational accuracy. Functionally, interacts with and stabilizes bases of the 16S rRNA that are involved in tRNA selection in the A site and with the mRNA backbone. Located at the interface of the 30S and 50S subunits, it traverses the body of the 30S subunit contacting proteins on the other side and probably holding the rRNA structure together. The combined cluster of proteins S8, S12 and S17 appears to hold together the shoulder and platform of the 30S subunit. The polypeptide is Small ribosomal subunit protein uS12 (Erwinia tasmaniensis (strain DSM 17950 / CFBP 7177 / CIP 109463 / NCPPB 4357 / Et1/99)).